We begin with the raw amino-acid sequence, 280 residues long: Hemin import ATP-binding protein HmuV (280 aa).

The ABC transporter domain maps to 26 to 260 (LAAAGGLRVH…GLLSEVYDQP (235 aa)). 59–66 (GPNGAGKS) is a binding site for ATP.

This sequence belongs to the ABC transporter superfamily. Heme (hemin) importer (TC 3.A.1.14.5) family. The complex is composed of two ATP-binding proteins (HmuV), two transmembrane proteins (HmuU) and a solute-binding protein (HmuT).

The protein resides in the cell membrane. In terms of biological role, part of the ABC transporter complex HmuTUV involved in hemin import. Responsible for energy coupling to the transport system. The protein is Hemin import ATP-binding protein HmuV of Streptomyces coelicolor (strain ATCC BAA-471 / A3(2) / M145).